The following is a 61-amino-acid chain: Small ribosomal subunit protein uS14B (61 aa).

Residues Cys-24, Cys-27, Cys-40, and Cys-43 each contribute to the Zn(2+) site.

Belongs to the universal ribosomal protein uS14 family. Zinc-binding uS14 subfamily. Part of the 30S ribosomal subunit. Contacts proteins S3 and S10. It depends on Zn(2+) as a cofactor.

In terms of biological role, binds 16S rRNA, required for the assembly of 30S particles and may also be responsible for determining the conformation of the 16S rRNA at the A site. The polypeptide is Small ribosomal subunit protein uS14B (Rhodococcus jostii (strain RHA1)).